The following is a 201-amino-acid chain: Auxin-binding protein 1 (201 aa).

A signal peptide spans 1-38 (MAPDLSELAAAAAARGAYLAGVGVAVLLAASFLPVAES). An intrachain disulfide couples Cys40 to Cys193. Zn(2+) is bound by residues His95, His97, and Glu101. Asn133 carries N-linked (GlcNAc...) asparagine glycosylation. A Zn(2+)-binding site is contributed by His144. Residues 198–201 (KDEL) carry the Prevents secretion from ER motif.

Homodimer. Post-translationally, glycosylated. As to expression, expressed in roots, coleoptiles, leaves, stems, tassels and ears.

The protein resides in the endoplasmic reticulum lumen. Receptor for the plant hormone auxin. This is Auxin-binding protein 1 from Zea mays (Maize).